The primary structure comprises 457 residues: Flavin-containing monooxygenase FMO GS-OX2 (457 aa).

17–22 serves as a coordination point for FAD; the sequence is GAGAAG. 211–216 is a binding site for NADP(+); that stretch reads GNFASG.

This sequence belongs to the FMO family.

It catalyses the reaction a (Z)-omega-(methylsulfanyl)-N-sulfo-alkylhydroximate S-glucoside + NADPH + O2 + H(+) = a (Z)-omega-(methylsulfinyl)-alkyl-glucosinolate + NADP(+) + H2O. Functionally, catalyzes the conversion of methylthioalkyl glucosinolates of any chain length into methylsulfinylalkyl glucosinolates. The sequence is that of Flavin-containing monooxygenase FMO GS-OX2 (FMOGS-OX2) from Arabidopsis thaliana (Mouse-ear cress).